Reading from the N-terminus, the 81-residue chain is ATP synthase subunit c (81 aa).

A run of 2 helical transmembrane segments spans residues 7 to 27 (AASV…PGIG) and 57 to 77 (LAFM…LLFA).

The protein belongs to the ATPase C chain family. In terms of assembly, F-type ATPases have 2 components, F(1) - the catalytic core - and F(0) - the membrane proton channel. F(1) has five subunits: alpha(3), beta(3), gamma(1), delta(1), epsilon(1). F(0) has four main subunits: a(1), b(1), b'(1) and c(10-14). The alpha and beta chains form an alternating ring which encloses part of the gamma chain. F(1) is attached to F(0) by a central stalk formed by the gamma and epsilon chains, while a peripheral stalk is formed by the delta, b and b' chains.

The protein localises to the cellular thylakoid membrane. Functionally, f(1)F(0) ATP synthase produces ATP from ADP in the presence of a proton or sodium gradient. F-type ATPases consist of two structural domains, F(1) containing the extramembraneous catalytic core and F(0) containing the membrane proton channel, linked together by a central stalk and a peripheral stalk. During catalysis, ATP synthesis in the catalytic domain of F(1) is coupled via a rotary mechanism of the central stalk subunits to proton translocation. Key component of the F(0) channel; it plays a direct role in translocation across the membrane. A homomeric c-ring of between 10-14 subunits forms the central stalk rotor element with the F(1) delta and epsilon subunits. The protein is ATP synthase subunit c of Synechococcus sp. (strain CC9902).